The following is a 103-amino-acid chain: Interleukin-8 (103 aa).

The first 25 residues, 1 to 25 (MTSKLAVAFLAVFLLSAALCEAAVL), serve as a signal peptide directing secretion. A Citrulline modification is found at arginine 27. Disulfide bonds link cysteine 34–cysteine 61 and cysteine 36–cysteine 77.

This sequence belongs to the intercrine alpha (chemokine CxC) family. In terms of assembly, homodimer. Interacts with TNFAIP6 (via Link domain); this interaction interferes with chemokine binding to glycosaminoglycans. Citrullination at Arg-27 prevents proteolysis, and dampens tissue inflammation, it also enhances leukocytosis, possibly through impaired chemokine clearance from the blood circulation. Alveolar macrophages.

It localises to the secreted. Functionally, chemotactic factor that mediates inflammatory response by attracting neutrophils, basophils, and T-cells to clear pathogens and protect the host from infection. Also plays an important role in neutrophil activation. Released in response to an inflammatory stimulus, exerts its effect by binding to the G-protein-coupled receptors CXCR1 and CXCR2, primarily found in neutrophils, monocytes and endothelial cells. G-protein heterotrimer (alpha, beta, gamma subunits) constitutively binds to CXCR1/CXCR2 receptor and activation by IL8 leads to beta and gamma subunits release from Galpha (GNAI2 in neutrophils) and activation of several downstream signaling pathways including PI3K and MAPK pathways. The chain is Interleukin-8 (CXCL8) from Sus scrofa (Pig).